Consider the following 729-residue polypeptide: Dipeptidyl peptidase 3 (729 aa).

His-459 lines the Zn(2+) pocket. Glu-460 is an active-site residue. Positions 464 and 517 each coordinate Zn(2+).

This sequence belongs to the peptidase M49 family. It depends on Zn(2+) as a cofactor.

It localises to the cytoplasm. The enzyme catalyses Release of an N-terminal dipeptide from a peptide comprising four or more residues, with broad specificity. Also acts on dipeptidyl 2-naphthylamides.. The polypeptide is Dipeptidyl peptidase 3 (dpp3) (Nematostella vectensis (Starlet sea anemone)).